A 348-amino-acid chain; its full sequence is Dihydroorotase (348 aa).

Residues His14 and His16 each contribute to the Zn(2+) site. Substrate is bound by residues His16–Arg18 and Asn42. Lys100, His137, and His175 together coordinate Zn(2+). Lys100 carries the post-translational modification N6-carboxylysine. His137 provides a ligand contact to substrate. Substrate is bound at residue Leu220. Asp248 provides a ligand contact to Zn(2+). Asp248 is a catalytic residue. Residues His252 and Ala264 each coordinate substrate.

The protein belongs to the metallo-dependent hydrolases superfamily. DHOase family. Class II DHOase subfamily. Homodimer. The cofactor is Zn(2+).

It catalyses the reaction (S)-dihydroorotate + H2O = N-carbamoyl-L-aspartate + H(+). It functions in the pathway pyrimidine metabolism; UMP biosynthesis via de novo pathway; (S)-dihydroorotate from bicarbonate: step 3/3. Functionally, catalyzes the reversible cyclization of carbamoyl aspartate to dihydroorotate. This is Dihydroorotase from Pseudomonas aeruginosa (strain UCBPP-PA14).